A 217-amino-acid polypeptide reads, in one-letter code: Probable coenzyme A transferase subunit beta (217 aa).

Residue Glu-50 is part of the active site.

It belongs to the 3-oxoacid CoA-transferase subunit B family. In terms of assembly, heterodimer of a subunit alpha and a subunit beta.

The protein is Probable coenzyme A transferase subunit beta (yodR) of Bacillus subtilis (strain 168).